The chain runs to 1200 residues: Chromosome partition protein Smc (1200 aa).

32–39 (PNGCGKSN) is an ATP binding site. Coiled coils occupy residues 171-219 (VTKY…AEKY) and 252-342 (LENL…MSEA). In terms of domain architecture, SMC hinge spans 528–644 (QGIFGLVADV…QDVATARAWT (117 aa)). Coiled-coil stretches lie at residues 679 to 706 (ALQKKREIAELATEVARVEERYNEILTR) and 735 to 762 (LASQEKDLHKAGEDLARVRERVRALEVE). Residues 763 to 795 (EGQLTQSHQALEHEEEASRGEVAHGQADREGRE) form a disordered region. Positions 772–795 (ALEHEEEASRGEVAHGQADREGRE) are enriched in basic and acidic residues. The stretch at 1002–1039 (HAELSKRYDFLTAQKKDLQSSIEQLKEAIQRIDATSRE) forms a coiled coil.

It belongs to the SMC family. As to quaternary structure, homodimer. Probably forms the Structural Maintenance of Chromosome (SMC) condensin-like complex with ScpA and ScpB.

It localises to the cytoplasm. Functionally, a conditionally essential component of the chromosome segregation machinery. Required for chromosome condensation and partitioning. Important for positioning of ParB-parS complexes (ori of replication) and of the ter replication site, as well as for segration of the ParB-parS complex and thus chromosome segregation. May act via the formation of a condensin-like complex containing Smc, ScpA and ScpB that pulls DNA away from mid-cell into both cell halves. The sequence is that of Chromosome partition protein Smc from Myxococcus xanthus (strain DK1622).